A 525-amino-acid chain; its full sequence is Keratin, type I cytoskeletal 24 (525 aa).

The interval 1–30 (MSCSSRASSSRAGGSSSARVSAGGSSFSSG) is disordered. The head stretch occupies residues 1–139 (MSCSSRASSS…VGDGGLFSGG (139 aa)). The coil 1A stretch occupies residues 140–175 (EKQTMQNLNDRLANYLDKVRALEEANTDLENKIKEW). An IF rod domain is found at 140–456 (EKQTMQNLND…RLLDGEGGGS (317 aa)). Residues 176–198 (YDKYGPGSGDGGSGRDYSKYYSI) are linker 1. The coil 1B stretch occupies residues 199-290 (IEDLRNQIIA…KNHEEEMKNM (92 aa)). A linker 12 region spans residues 291–313 (QGSSGGEVTVEMNAAPGTDLTKL). A coil 2 region spans residues 314-452 (LNDMRAQYEE…ETYRRLLDGE (139 aa)). The tract at residues 453–525 (GGGSSFAEFG…VSSISEVKVK (73 aa)) is tail. Residues 459–497 (AEFGGRNSGSVNMGSRDLVSGDSRSGSCSGQGRDSSKTR) form a disordered region. The segment covering 480–491 (DSRSGSCSGQGR) has biased composition (polar residues).

The protein belongs to the intermediate filament family. Heterotetramer of two type I and two type II keratins. Highly expressed in keratinocytes, placenta, colon and spleen. Expressed at lower level in thymus and testis.

This chain is Keratin, type I cytoskeletal 24 (KRT24), found in Homo sapiens (Human).